We begin with the raw amino-acid sequence, 592 residues long: Arginine--tRNA ligase (592 aa).

The short motif at 112-122 is the 'HIGH' region element; the sequence is VNPNKELHVGH.

It belongs to the class-I aminoacyl-tRNA synthetase family. As to quaternary structure, monomer.

The protein localises to the cytoplasm. It catalyses the reaction tRNA(Arg) + L-arginine + ATP = L-arginyl-tRNA(Arg) + AMP + diphosphate. This chain is Arginine--tRNA ligase, found in Thermus thermophilus (strain ATCC BAA-163 / DSM 7039 / HB27).